The following is a 223-amino-acid chain: Endonuclease V (223 aa).

2 residues coordinate Mg(2+): Asp-35 and Asp-103.

It belongs to the endonuclease V family. Mg(2+) is required as a cofactor.

It localises to the cytoplasm. The enzyme catalyses Endonucleolytic cleavage at apurinic or apyrimidinic sites to products with a 5'-phosphate.. Its function is as follows. DNA repair enzyme involved in the repair of deaminated bases. Selectively cleaves double-stranded DNA at the second phosphodiester bond 3' to a deoxyinosine leaving behind the intact lesion on the nicked DNA. The protein is Endonuclease V of Salmonella paratyphi A (strain ATCC 9150 / SARB42).